Here is a 429-residue protein sequence, read N- to C-terminus: UDP-N-acetylglucosamine 1-carboxyvinyltransferase (429 aa).

Residue 22–23 (KN) participates in phosphoenolpyruvate binding. R102 is a UDP-N-acetyl-alpha-D-glucosamine binding site. The Proton donor role is filled by C126. At C126 the chain carries 2-(S-cysteinyl)pyruvic acid O-phosphothioketal. Residues 131–135 (RPVDL), D316, and I338 contribute to the UDP-N-acetyl-alpha-D-glucosamine site.

This sequence belongs to the EPSP synthase family. MurA subfamily.

It localises to the cytoplasm. It catalyses the reaction phosphoenolpyruvate + UDP-N-acetyl-alpha-D-glucosamine = UDP-N-acetyl-3-O-(1-carboxyvinyl)-alpha-D-glucosamine + phosphate. It functions in the pathway cell wall biogenesis; peptidoglycan biosynthesis. In terms of biological role, cell wall formation. Adds enolpyruvyl to UDP-N-acetylglucosamine. The sequence is that of UDP-N-acetylglucosamine 1-carboxyvinyltransferase from Rhodopseudomonas palustris (strain BisA53).